Here is a 334-residue protein sequence, read N- to C-terminus: L-lactate dehydrogenase B chain (334 aa).

Ala2 carries the post-translational modification N-acetylalanine. Lys7 carries the N6-acetyllysine modification. 31 to 53 contributes to the NAD(+) binding site; it reads QVGMACAISILGKSLADELALVD. Position 44 is a phosphoserine (Ser44). Lys58 is subject to N6-acetyllysine. Arg100 contributes to the NAD(+) binding site. Position 107 (Arg107) interacts with substrate. N6-acetyllysine is present on Lys119. Asn139 contacts NAD(+). Substrate-binding residues include Asn139 and Arg170. His194 (proton acceptor) is an active-site residue. Phosphotyrosine is present on Tyr240. Thr249 is a substrate binding site. Lys329 is subject to N6-acetyllysine.

The protein belongs to the LDH/MDH superfamily. LDH family. Homotetramer. Interacts with PTEN upstream reading frame protein MP31; the interaction leads to inhibition of mitochondrial lactate dehydrogenase activity, preventing conversion of lactate to pyruvate in mitochondria. As to expression, predominantly expressed in aerobic tissues such as cardiac muscle.

The protein resides in the cytoplasm. It is found in the mitochondrion inner membrane. The catalysed reaction is (S)-lactate + NAD(+) = pyruvate + NADH + H(+). It participates in fermentation; pyruvate fermentation to lactate; (S)-lactate from pyruvate: step 1/1. Functionally, interconverts simultaneously and stereospecifically pyruvate and lactate with concomitant interconversion of NADH and NAD(+). This Homo sapiens (Human) protein is L-lactate dehydrogenase B chain (LDHB).